The sequence spans 488 residues: ATP synthase subunit beta, chloroplastic (488 aa).

170-177 lines the ATP pocket; sequence GGAGVGKT.

This sequence belongs to the ATPase alpha/beta chains family. As to quaternary structure, F-type ATPases have 2 components, CF(1) - the catalytic core - and CF(0) - the membrane proton channel. CF(1) has five subunits: alpha(3), beta(3), gamma(1), delta(1), epsilon(1). CF(0) has four main subunits: a(1), b(1), b'(1) and c(9-12).

It localises to the plastid. The protein localises to the chloroplast thylakoid membrane. The enzyme catalyses ATP + H2O + 4 H(+)(in) = ADP + phosphate + 5 H(+)(out). Its function is as follows. Produces ATP from ADP in the presence of a proton gradient across the membrane. The catalytic sites are hosted primarily by the beta subunits. The protein is ATP synthase subunit beta, chloroplastic of Picea abies (Norway spruce).